The following is a 290-amino-acid chain: Putative heme oxygenase 3 (290 aa).

The segment covering 1 to 12 (MSSEVETAEAVD) has biased composition (acidic residues). The segment at 1 to 33 (MSSEVETAEAVDESEKNSMASEKENHSKIADFS) is disordered. A compositionally biased stretch (basic and acidic residues) spans 13 to 33 (ESEKNSMASEKENHSKIADFS). HRM repeat units follow at residues 238-243 (KCPFNA) and 255-260 (NCPFQM).

The protein belongs to the heme oxygenase family. In terms of tissue distribution, found in the spleen, liver, thymus, prostate, heart, kidney, brain and testis.

It catalyses the reaction heme b + 3 reduced [NADPH--hemoprotein reductase] + 3 O2 = biliverdin IXalpha + CO + Fe(2+) + 3 oxidized [NADPH--hemoprotein reductase] + 3 H2O + H(+). Functionally, heme oxygenase cleaves the heme ring at the alpha methene bridge to form biliverdin. Biliverdin is subsequently converted to bilirubin by biliverdin reductase. Heme oxygenase 3 could be implicated in some heme-dependent regulatory role in the cell. The sequence is that of Putative heme oxygenase 3 (Hmox3) from Rattus norvegicus (Rat).